A 533-amino-acid polypeptide reads, in one-letter code: GDP-fucose protein O-fucosyltransferase 4 (533 aa).

Topologically, residues 1–20 (MSAGCTQLVWGGRLHWGASH) are cytoplasmic. A helical; Signal-anchor for type II membrane protein transmembrane segment spans residues 21-37 (LLSCLLALCALWVLAAA). Residues 38-533 (EPTEGGSANV…ETYIKRSMNH (496 aa)) lie on the Lumenal side of the membrane. N148, N206, and N358 each carry an N-linked (GlcNAc...) asparagine glycan. A disulfide bridge links C429 with C432. N511 carries N-linked (GlcNAc...) asparagine glycosylation.

The protein belongs to the glycosyltransferase 10 family.

Its subcellular location is the endoplasmic reticulum membrane. The catalysed reaction is L-threonyl-[protein] + GDP-beta-L-fucose = 3-O-(alpha-L-fucosyl)-L-threonyl-[protein] + GDP + H(+). The enzyme catalyses L-seryl-[protein] + GDP-beta-L-fucose = 3-O-(alpha-L-fucosyl)-L-seryl-[protein] + GDP + H(+). It participates in protein modification; protein glycosylation. Protein O-fucosyltransferase that specifically catalyzes O-fucosylation of serine or threonine residues in EMI domains of target proteins. Attaches fucose through an O-glycosidic linkage. O-fucosylation of EMI domain-containing proteins may be required for facilitating protein folding and secretion. The polypeptide is GDP-fucose protein O-fucosyltransferase 4 (fut11) (Xenopus tropicalis (Western clawed frog)).